The following is a 339-amino-acid chain: Replication factor C subunit 2 (339 aa).

48 to 55 (YGPPGTGK) is an ATP binding site.

It belongs to the activator 1 small subunits family. In terms of assembly, heterotetramer of subunits RFC2, RFC3, RFC4 and RFC5 that can form a complex with RFC1. Expressed in roots, leaves, shoot apical meristem (SAM), flag leaves and panicles.

Its subcellular location is the nucleus. Its function is as follows. May be involved in DNA replication and thus regulate cell proliferation. In Oryza sativa subsp. japonica (Rice), this protein is Replication factor C subunit 2 (RFC2).